Reading from the N-terminus, the 115-residue chain is Insulin (115 aa).

The signal sequence occupies residues 1–22 (MAALWLQSVSLLVLMLVSWSGS). Intrachain disulfides connect cysteine 32/cysteine 101, cysteine 44/cysteine 114, and cysteine 100/cysteine 105. The propeptide at 56 to 92 (DVDPLLGFLPAKSGGAAAGGENEVAEFAFKDQMEMMV) is c peptide.

Belongs to the insulin family. Heterodimer of a B chain and an A chain linked by two disulfide bonds.

It localises to the secreted. Its function is as follows. Insulin decreases blood glucose concentration. It increases cell permeability to monosaccharides, amino acids and fatty acids. It accelerates glycolysis, the pentose phosphate cycle, and glycogen synthesis in liver. This chain is Insulin (ins), found in Verasper moseri (Barfin flounder).